The sequence spans 546 residues: 2-succinyl-5-enolpyruvyl-6-hydroxy-3-cyclohexene-1-carboxylate synthase (546 aa).

It belongs to the TPP enzyme family. MenD subfamily. In terms of assembly, homodimer. It depends on Mg(2+) as a cofactor. Requires Mn(2+) as cofactor. Thiamine diphosphate serves as cofactor.

It catalyses the reaction isochorismate + 2-oxoglutarate + H(+) = 5-enolpyruvoyl-6-hydroxy-2-succinyl-cyclohex-3-ene-1-carboxylate + CO2. It participates in quinol/quinone metabolism; 1,4-dihydroxy-2-naphthoate biosynthesis; 1,4-dihydroxy-2-naphthoate from chorismate: step 2/7. It functions in the pathway quinol/quinone metabolism; menaquinone biosynthesis. Catalyzes the thiamine diphosphate-dependent decarboxylation of 2-oxoglutarate and the subsequent addition of the resulting succinic semialdehyde-thiamine pyrophosphate anion to isochorismate to yield 2-succinyl-5-enolpyruvyl-6-hydroxy-3-cyclohexene-1-carboxylate (SEPHCHC). The chain is 2-succinyl-5-enolpyruvyl-6-hydroxy-3-cyclohexene-1-carboxylate synthase from Mycolicibacterium smegmatis (strain ATCC 700084 / mc(2)155) (Mycobacterium smegmatis).